The primary structure comprises 419 residues: Effector protein BipC (419 aa).

Disordered stretches follow at residues 62–91 and 338–402; these read VAGS…TVSG and LQSG…AKSQ. Composition is skewed to basic and acidic residues over residues 71 to 91 and 380 to 392; these read ELAR…TVSG and TRDE…REAA.

Belongs to the SctB/SipC family.

Its subcellular location is the secreted. The protein is Effector protein BipC (bipC) of Burkholderia mallei (strain NCTC 10247).